Reading from the N-terminus, the 297-residue chain is Phosphoribosylaminoimidazole-succinocarboxamide synthase (297 aa).

The protein belongs to the SAICAR synthetase family.

It catalyses the reaction 5-amino-1-(5-phospho-D-ribosyl)imidazole-4-carboxylate + L-aspartate + ATP = (2S)-2-[5-amino-1-(5-phospho-beta-D-ribosyl)imidazole-4-carboxamido]succinate + ADP + phosphate + 2 H(+). It functions in the pathway purine metabolism; IMP biosynthesis via de novo pathway; 5-amino-1-(5-phospho-D-ribosyl)imidazole-4-carboxamide from 5-amino-1-(5-phospho-D-ribosyl)imidazole-4-carboxylate: step 1/2. The polypeptide is Phosphoribosylaminoimidazole-succinocarboxamide synthase (purC) (Mycobacterium leprae (strain TN)).